The chain runs to 475 residues: Bifunctional protein HldE (475 aa).

Positions 1–318 (MKVTLPDFER…ENAVRGRAET (318 aa)) are ribokinase. An ATP-binding site is contributed by 195-198 (NLSE). Residue Asp264 is part of the active site. Positions 344–475 (MTNGVFDILH…NIIKKIQKNS (132 aa)) are cytidylyltransferase.

This sequence in the N-terminal section; belongs to the carbohydrate kinase PfkB family. It in the C-terminal section; belongs to the cytidylyltransferase family. Homodimer.

It carries out the reaction D-glycero-beta-D-manno-heptose 7-phosphate + ATP = D-glycero-beta-D-manno-heptose 1,7-bisphosphate + ADP + H(+). The enzyme catalyses D-glycero-beta-D-manno-heptose 1-phosphate + ATP + H(+) = ADP-D-glycero-beta-D-manno-heptose + diphosphate. Its pathway is nucleotide-sugar biosynthesis; ADP-L-glycero-beta-D-manno-heptose biosynthesis; ADP-L-glycero-beta-D-manno-heptose from D-glycero-beta-D-manno-heptose 7-phosphate: step 1/4. It functions in the pathway nucleotide-sugar biosynthesis; ADP-L-glycero-beta-D-manno-heptose biosynthesis; ADP-L-glycero-beta-D-manno-heptose from D-glycero-beta-D-manno-heptose 7-phosphate: step 3/4. Functionally, catalyzes the phosphorylation of D-glycero-D-manno-heptose 7-phosphate at the C-1 position to selectively form D-glycero-beta-D-manno-heptose-1,7-bisphosphate. In terms of biological role, catalyzes the ADP transfer from ATP to D-glycero-beta-D-manno-heptose 1-phosphate, yielding ADP-D-glycero-beta-D-manno-heptose. The protein is Bifunctional protein HldE of Cronobacter sakazakii (strain ATCC BAA-894) (Enterobacter sakazakii).